We begin with the raw amino-acid sequence, 403 residues long: Blue light- and temperature-regulated antirepressor BluF (403 aa).

In terms of domain architecture, BLUF spans 2–93; the sequence is LTTLIYRSHI…ARRFGKAGME (92 aa). Positions 98–144 are joining helix; the sequence is RLHERDDVLQAVFDKGTSKFQLTYDDRALQFFRTFVLATEQSTYFEI. Positions 155–403 constitute an EAL domain; sequence DGSDKELDSC…IPSIAWPEKK (249 aa).

As to quaternary structure, monomer, it undergoes transient dimerization following photoexcitation or upon temperature reduction, with a relaxation time of about 2 minutes. The dimer may be the inactive state. Interacts with the N- and C-terminal domains of BluR. Can also interact with the C-terminal domain of MlrA. Requires FAD as cofactor.

Binds to and releases the BluR repressor from its bound DNA target in a blue light-dependent (470 nm) fashion. A shift to low temperature also triggers a BluF-mediated relief of repression by BluR, suggesting BluF may serve as a thermometer. Blue light may act to increase the affinity of BluF for BluR, allowing it to be released from its operator. The protein has a reversible photocycle, and undergoes structural changes, probably in the EAL domain, in response to light. This is Blue light- and temperature-regulated antirepressor BluF from Escherichia coli (strain K12).